Reading from the N-terminus, the 574-residue chain is NEDD4-binding protein 2-like 2 (574 aa).

Disordered regions lie at residues 82–110 (HKEMPGDKVGGTESIGSQALQDGKPLAPA), 127–161 (YKPPEKKKCRERKNETATFNNTDSKRRQEEKQKFN), 182–204 (ENENEASQGSCKEPEPSQEQTLS), and 542–574 (TQKSTQTPLPLQGDQRWGGSLGSHSQVSITDDY). Composition is skewed to basic and acidic residues over residues 129–141 (PPEKKKCRERKNE) and 149–161 (DSKRRQEEKQKFN). A coiled-coil region spans residues 162–196 (SKKLEIDTELSQFYKEIEELENENEASQGSCKEPE). Positions 563–574 (GSHSQVSITDDY) are enriched in polar residues.

The polypeptide is NEDD4-binding protein 2-like 2 (N4bp2l2) (Rattus norvegicus (Rat)).